Reading from the N-terminus, the 305-residue chain is Dihydroorotate dehydrogenase B (NAD(+)), catalytic subunit (305 aa).

Residues S21 and 45–46 (KA) contribute to the FMN site. Residues K45 and 69–73 (NAIGL) each bind substrate. N99 and N127 together coordinate FMN. Substrate is bound at residue N127. The active-site Nucleophile is C130. Residues K165 and I190 each contribute to the FMN site. 191 to 192 (NT) provides a ligand contact to substrate. Residues G216, 242-243 (GG), and 264-265 (GT) each bind FMN.

It belongs to the dihydroorotate dehydrogenase family. Type 1 subfamily. Heterotetramer of 2 PyrK and 2 PyrD type B subunits. FMN serves as cofactor.

Its subcellular location is the cytoplasm. The enzyme catalyses (S)-dihydroorotate + NAD(+) = orotate + NADH + H(+). It participates in pyrimidine metabolism; UMP biosynthesis via de novo pathway; orotate from (S)-dihydroorotate (NAD(+) route): step 1/1. Catalyzes the conversion of dihydroorotate to orotate with NAD(+) as electron acceptor. In Staphylococcus carnosus (strain TM300), this protein is Dihydroorotate dehydrogenase B (NAD(+)), catalytic subunit (pyrD).